Consider the following 330-residue polypeptide: Anthranilate phosphoribosyltransferase (330 aa).

Residues Gly-79, 82-83 (GD), Thr-87, 89-92 (NIST), 107-115 (KHGNYGVSS), and Ser-119 each bind 5-phospho-alpha-D-ribose 1-diphosphate. Anthranilate is bound at residue Gly-79. Ser-91 lines the Mg(2+) pocket. An anthranilate-binding site is contributed by Asn-110. Arg-165 contacts anthranilate. Asp-223 and Glu-224 together coordinate Mg(2+).

Belongs to the anthranilate phosphoribosyltransferase family. In terms of assembly, homodimer. The cofactor is Mg(2+).

The catalysed reaction is N-(5-phospho-beta-D-ribosyl)anthranilate + diphosphate = 5-phospho-alpha-D-ribose 1-diphosphate + anthranilate. Its pathway is amino-acid biosynthesis; L-tryptophan biosynthesis; L-tryptophan from chorismate: step 2/5. Functionally, catalyzes the transfer of the phosphoribosyl group of 5-phosphorylribose-1-pyrophosphate (PRPP) to anthranilate to yield N-(5'-phosphoribosyl)-anthranilate (PRA). The sequence is that of Anthranilate phosphoribosyltransferase from Flavobacterium psychrophilum (strain ATCC 49511 / DSM 21280 / CIP 103535 / JIP02/86).